A 93-amino-acid chain; its full sequence is Small ribosomal subunit protein bS18 (93 aa).

This sequence belongs to the bacterial ribosomal protein bS18 family. In terms of assembly, part of the 30S ribosomal subunit. Forms a tight heterodimer with protein bS6.

Its function is as follows. Binds as a heterodimer with protein bS6 to the central domain of the 16S rRNA, where it helps stabilize the platform of the 30S subunit. The chain is Small ribosomal subunit protein bS18 from Paracidovorax citrulli (strain AAC00-1) (Acidovorax citrulli).